A 151-amino-acid polypeptide reads, in one-letter code: Globin CTT-VIII (151 aa).

The Globin domain occupies 4-148 (PMSADQLALF…MFFYILHALE (145 aa)). Heme b is bound by residues H62 and H97.

It belongs to the globin family. Homodimer.

The sequence is that of Globin CTT-VIII (CTT-8) from Chironomus thummi thummi (Midge).